We begin with the raw amino-acid sequence, 207 residues long: Large ribosomal subunit protein uL4 (207 aa).

Residues 54 to 74 form a disordered region; the sequence is RSDVRGGGKKPYRQKGTGNAR.

This sequence belongs to the universal ribosomal protein uL4 family. As to quaternary structure, part of the 50S ribosomal subunit.

Functionally, one of the primary rRNA binding proteins, this protein initially binds near the 5'-end of the 23S rRNA. It is important during the early stages of 50S assembly. It makes multiple contacts with different domains of the 23S rRNA in the assembled 50S subunit and ribosome. In terms of biological role, forms part of the polypeptide exit tunnel. In Magnetococcus marinus (strain ATCC BAA-1437 / JCM 17883 / MC-1), this protein is Large ribosomal subunit protein uL4.